The chain runs to 59 residues: Large ribosomal subunit protein bL32 (59 aa).

The interval 1–25 is disordered; sequence MAVQQNKKSPSKRGMHRAHDFLTAP.

This sequence belongs to the bacterial ribosomal protein bL32 family.

The sequence is that of Large ribosomal subunit protein bL32 from Azoarcus sp. (strain BH72).